The sequence spans 364 residues: Uroporphyrinogen decarboxylase (364 aa).

Residues 28–32 (RQAGR), aspartate 78, tyrosine 160, threonine 215, and histidine 333 contribute to the substrate site.

Belongs to the uroporphyrinogen decarboxylase family. Homodimer.

It is found in the cytoplasm. It catalyses the reaction uroporphyrinogen III + 4 H(+) = coproporphyrinogen III + 4 CO2. It functions in the pathway porphyrin-containing compound metabolism; protoporphyrin-IX biosynthesis; coproporphyrinogen-III from 5-aminolevulinate: step 4/4. Catalyzes the decarboxylation of four acetate groups of uroporphyrinogen-III to yield coproporphyrinogen-III. In Burkholderia mallei (strain NCTC 10247), this protein is Uroporphyrinogen decarboxylase.